Reading from the N-terminus, the 1046-residue chain is SWI/SNF-related matrix-associated actin-dependent regulator of chromatin subfamily A member 1 (1046 aa).

The segment at 27–61 is disordered; that stretch reads EQPGPSTFKEEGAAAAATEGTTATEKGEKKEKITS. Low complexity predominate over residues 39 to 50; that stretch reads AAAAATEGTTAT. Residues serine 120 and serine 123 each carry the phosphoserine modification. Residues 199–364 enclose the Helicase ATP-binding domain; sequence ISLYENGVNG…WALLNFLLPD (166 aa). 212 to 219 contacts ATP; the sequence is DEMGLGKT. The DEAH box signature appears at 315-318; it reads DEAH. The region spanning 494-645 is the Helicase C-terminal domain; that stretch reads ALDKLLARIK…SIVIQQGRLI (152 aa). Glycyl lysine isopeptide (Lys-Gly) (interchain with G-Cter in SUMO2) cross-links involve residues lysine 654, lysine 720, and lysine 742. The segment at 819–840 is disordered; it reads AQREEQKKIDGAEPLTPQETEE. Residues 820–829 are compositionally biased toward basic and acidic residues; it reads QREEQKKIDG. Residues 847–899 enclose the SANT 1 domain; sequence QGFTNWTKRDFNQFIKANEKYGRDDIDNIAREVEGKSPEEVMEYSAVFWERCN. Phosphotyrosine is present on tyrosine 946. The SANT 2 domain occupies 950-1014; that stretch reads KGKNYTEEED…QRRCNTLISL (65 aa). The stretch at 1003 to 1037 forms a coiled coil; it reads EFQRRCNTLISLIEKENMEIEERERAEKKKRATKT. Residues 1025 to 1046 form a disordered region; it reads RERAEKKKRATKTPMVKFSAFS.

This sequence belongs to the SNF2/RAD54 helicase family. ISWI subfamily. As to quaternary structure, may form homodimers. Component of the ACF-1 ISWI chromatin remodeling complex at least composed of SMARCA1 and BAZ1A, which regulates the spacing of histone octamers on the DNA template to facilitate access to DNA. Within the complex interacts with BAZ1A; the interaction is direct. Component of the WICH-1 ISWI chromatin remodeling complex at least composed of SMARCA1 and BAZ1B/WSTF. Within the complex interacts with BAZ1B/WSTF. Component of the NoRC-1 ISWI chromatin remodeling complex at least composed of SMARCA1 and BAZ2A/TIP5. Within the complex interacts with BAZ2A/TIP5. Component of the BRF-1 ISWI chromatin remodeling complex at least composed of SMARCA1 and BAZ2B. Within the complex interacts with BAZ2B. Component of the NURF-1 ISWI chromatin remodeling complex (also called the nucleosome-remodeling factor (NURF) complex) at least composed of SMARCA1, BPTF, RBBP4 and RBBP7. Within the complex interacts with BPTF. Within the complex interacts with RBBP4 and RBBP7. Component of the CERF-1 ISWI chromatin remodeling complex (also called the CECR2-containing-remodeling factor (CERF) complex) at least composed of CECR2 and SMARCA1. LUZP1 is detected as part of the CERF-1 complex in embryonic stem cells where it is involved in complex stabilization but is not detected in the complex in the testis. Component of the RSF-1 ISWI chromatin remodeling complex at least composed of SMARCA1 and RSF1. Within the complex interacts with RSF1. Interacts with PRLR. Interacts with ERCC6. As to expression, predominantly expressed in cortex, cerebellum, ovaries, testes, uterus and placenta.

Its subcellular location is the nucleus. It catalyses the reaction ATP + H2O = ADP + phosphate + H(+). In terms of biological role, ATPase that possesses intrinsic ATP-dependent chromatin-remodeling activity. ATPase activity is substrate-dependent, and is increased when nucleosomes are the substrate, but is also catalytically active when DNA alone is the substrate. Catalytic subunit of ISWI chromatin-remodeling complexes, which form ordered nucleosome arrays on chromatin and facilitate access to DNA during DNA-templated processes such as DNA replication, transcription, and repair. Within the ISWI chromatin-remodeling complexes, slides edge- and center-positioned histone octamers away from their original location on the DNA template. Catalytic activity and histone octamer sliding propensity is regulated and determined by components of the ISWI chromatin-remodeling complexes. The BAZ1A-, BAZ1B-, BAZ2A- and BAZ2B-containing ISWI chromatin-remodeling complexes regulate the spacing of nucleosomes along the chromatin and have the ability to slide mononucleosomes to the center of a DNA template. The CECR2- and RSF1-containing ISWI chromatin-remodeling complexes do not have the ability to slide mononucleosomes to the center of a DNA template. Within the NURF-1 and CERF-1 ISWI chromatin remodeling complexes, nucleosomes are the preferred substrate for its ATPase activity. Within the NURF-1 ISWI chromatin-remodeling complex, binds to the promoters of En1 and En2 to positively regulate their expression and promote brain development. May promote neurite outgrowth. May be involved in the development of luteal cells. Facilitates nucleosome assembly during DNA replication, ensuring replication fork progression and genomic stability by preventing replication stress and nascent DNA gaps. The sequence is that of SWI/SNF-related matrix-associated actin-dependent regulator of chromatin subfamily A member 1 (Smarca1) from Mus musculus (Mouse).